The chain runs to 210 residues: Potassium-transporting ATPase KdpC subunit (210 aa).

A helical membrane pass occupies residues 13–33 (LVTLVLLLVCGLAYPLILTGI).

The protein belongs to the KdpC family. The system is composed of three essential subunits: KdpA, KdpB and KdpC.

The protein resides in the cell membrane. Functionally, part of the high-affinity ATP-driven potassium transport (or Kdp) system, which catalyzes the hydrolysis of ATP coupled with the electrogenic transport of potassium into the cytoplasm. This subunit acts as a catalytic chaperone that increases the ATP-binding affinity of the ATP-hydrolyzing subunit KdpB by the formation of a transient KdpB/KdpC/ATP ternary complex. The protein is Potassium-transporting ATPase KdpC subunit of Clostridium kluyveri (strain ATCC 8527 / DSM 555 / NBRC 12016 / NCIMB 10680 / K1).